Here is a 210-residue protein sequence, read N- to C-terminus: Protein GrpE (210 aa).

The tract at residues K191 to A210 is disordered.

Belongs to the GrpE family. Homodimer.

It localises to the cytoplasm. Its function is as follows. Participates actively in the response to hyperosmotic and heat shock by preventing the aggregation of stress-denatured proteins, in association with DnaK and GrpE. It is the nucleotide exchange factor for DnaK and may function as a thermosensor. Unfolded proteins bind initially to DnaJ; upon interaction with the DnaJ-bound protein, DnaK hydrolyzes its bound ATP, resulting in the formation of a stable complex. GrpE releases ADP from DnaK; ATP binding to DnaK triggers the release of the substrate protein, thus completing the reaction cycle. Several rounds of ATP-dependent interactions between DnaJ, DnaK and GrpE are required for fully efficient folding. This Rhizobium etli (strain CIAT 652) protein is Protein GrpE.